Consider the following 152-residue polypeptide: Large ribosomal subunit protein bL9 (152 aa).

Belongs to the bacterial ribosomal protein bL9 family.

Functionally, binds to the 23S rRNA. The chain is Large ribosomal subunit protein bL9 from Mycobacterium avium (strain 104).